A 364-amino-acid polypeptide reads, in one-letter code: Protein-glutamate methylesterase/protein-glutamine glutaminase (364 aa).

The Response regulatory domain maps to 7–124; sequence RALIVDDSAL…SQNMPDMAEE (118 aa). D58 bears the 4-aspartylphosphate mark. The 198-residue stretch at 167-364 folds into the CheB-type methylesterase domain; sequence ETTSFVRNVL…MAEEIVKIIS (198 aa). Catalysis depends on residues S181, H208, and D308.

It belongs to the CheB family. In terms of processing, phosphorylated by CheA. Phosphorylation of the N-terminal regulatory domain activates the methylesterase activity.

It is found in the cytoplasm. It carries out the reaction [protein]-L-glutamate 5-O-methyl ester + H2O = L-glutamyl-[protein] + methanol + H(+). The catalysed reaction is L-glutaminyl-[protein] + H2O = L-glutamyl-[protein] + NH4(+). In terms of biological role, involved in chemotaxis. Part of a chemotaxis signal transduction system that modulates chemotaxis in response to various stimuli. Catalyzes the demethylation of specific methylglutamate residues introduced into the chemoreceptors (methyl-accepting chemotaxis proteins or MCP) by CheR. Also mediates the irreversible deamidation of specific glutamine residues to glutamic acid. This chain is Protein-glutamate methylesterase/protein-glutamine glutaminase, found in Methanosarcina barkeri (strain Fusaro / DSM 804).